Consider the following 89-residue polypeptide: Myrmicitoxin(1)-Pr2a (89 aa).

Residues M1–A23 form the signal peptide. A propeptide spanning residues T24–P61 is cleaved from the precursor. N88 is subject to Asparagine amide.

Belongs to the formicidae venom clade 1 family. As to expression, expressed by the venom gland.

Its subcellular location is the secreted. In terms of biological role, vertebrate-selective toxin that causes pain by targeting voltage-gated sodium channels. This Pogonomyrmex rugosus (Desert harvester ant) protein is Myrmicitoxin(1)-Pr2a.